The chain runs to 375 residues: 23S rRNA (uracil(747)-C(5))-methyltransferase RlmC (375 aa).

Positions 3, 11, 14, and 87 each coordinate [4Fe-4S] cluster. S-adenosyl-L-methionine-binding residues include glutamine 212, phenylalanine 241, glutamate 262, and asparagine 307. Cysteine 334 serves as the catalytic Nucleophile.

The protein belongs to the class I-like SAM-binding methyltransferase superfamily. RNA M5U methyltransferase family. RlmC subfamily.

It catalyses the reaction uridine(747) in 23S rRNA + S-adenosyl-L-methionine = 5-methyluridine(747) in 23S rRNA + S-adenosyl-L-homocysteine + H(+). In terms of biological role, catalyzes the formation of 5-methyl-uridine at position 747 (m5U747) in 23S rRNA. This is 23S rRNA (uracil(747)-C(5))-methyltransferase RlmC from Enterobacter sp. (strain 638).